A 381-amino-acid chain; its full sequence is Acetylornithine deacetylase (381 aa).

H79 serves as a coordination point for Zn(2+). D81 is an active-site residue. Residue D111 participates in Zn(2+) binding. E143 is an active-site residue. Residues E144, E168, and H354 each coordinate Zn(2+).

This sequence belongs to the peptidase M20A family. ArgE subfamily. In terms of assembly, homodimer. It depends on Zn(2+) as a cofactor. The cofactor is Co(2+). Glutathione serves as cofactor.

It localises to the cytoplasm. It catalyses the reaction N(2)-acetyl-L-ornithine + H2O = L-ornithine + acetate. It participates in amino-acid biosynthesis; L-arginine biosynthesis; L-ornithine from N(2)-acetyl-L-ornithine (linear): step 1/1. In terms of biological role, catalyzes the hydrolysis of the amide bond of N(2)-acetylated L-amino acids. Cleaves the acetyl group from N-acetyl-L-ornithine to form L-ornithine, an intermediate in L-arginine biosynthesis pathway, and a branchpoint in the synthesis of polyamines. The polypeptide is Acetylornithine deacetylase (Buchnera aphidicola subsp. Acyrthosiphon pisum (strain Tuc7)).